Consider the following 893-residue polypeptide: Valine--tRNA ligase (893 aa).

The short motif at 57–67 (PNVTGTLHMGH) is the 'HIGH' region element. The 'KMSKS' region motif lies at 545 to 549 (KMSKS). ATP is bound at residue Lys548. A coiled-coil region spans residues 821-855 (TSGSVDLEAERKRLEKDLAAAQKELATTEGKLGNE).

The protein belongs to the class-I aminoacyl-tRNA synthetase family. ValS type 1 subfamily. Monomer.

Its subcellular location is the cytoplasm. It carries out the reaction tRNA(Val) + L-valine + ATP = L-valyl-tRNA(Val) + AMP + diphosphate. Functionally, catalyzes the attachment of valine to tRNA(Val). As ValRS can inadvertently accommodate and process structurally similar amino acids such as threonine, to avoid such errors, it has a 'posttransfer' editing activity that hydrolyzes mischarged Thr-tRNA(Val) in a tRNA-dependent manner. The sequence is that of Valine--tRNA ligase from Nocardia farcinica (strain IFM 10152).